Consider the following 236-residue polypeptide: Purine nucleoside phosphorylase DeoD-type (236 aa).

His5 serves as a coordination point for a purine D-ribonucleoside. Phosphate is bound by residues Gly21, Arg25, Arg44, and 88–91; that span reads RIGS. A purine D-ribonucleoside-binding positions include 180-182 and 204-205; these read EME and SD. Catalysis depends on Asp205, which acts as the Proton donor.

Belongs to the PNP/UDP phosphorylase family. In terms of assembly, homohexamer; trimer of homodimers.

It carries out the reaction a purine D-ribonucleoside + phosphate = a purine nucleobase + alpha-D-ribose 1-phosphate. It catalyses the reaction a purine 2'-deoxy-D-ribonucleoside + phosphate = a purine nucleobase + 2-deoxy-alpha-D-ribose 1-phosphate. Its function is as follows. Catalyzes the reversible phosphorolytic breakdown of the N-glycosidic bond in the beta-(deoxy)ribonucleoside molecules, with the formation of the corresponding free purine bases and pentose-1-phosphate. This Hahella chejuensis (strain KCTC 2396) protein is Purine nucleoside phosphorylase DeoD-type.